The following is a 245-amino-acid chain: Probable transcriptional regulatory protein LVIS_1199 (245 aa).

Residues 1-23 (MSGHSKWHNIQGRKNAQDAKRGK) are disordered.

This sequence belongs to the TACO1 family.

It is found in the cytoplasm. This chain is Probable transcriptional regulatory protein LVIS_1199, found in Levilactobacillus brevis (strain ATCC 367 / BCRC 12310 / CIP 105137 / JCM 1170 / LMG 11437 / NCIMB 947 / NCTC 947) (Lactobacillus brevis).